Here is a 471-residue protein sequence, read N- to C-terminus: FAD-linked oxidoreductase sorD (471 aa).

The signal sequence occupies residues 1-23 (MQAASAFATCLLASVGGNSSAVA). Asn18, Asn29, Asn174, Asn279, and Asn351 each carry an N-linked (GlcNAc...) asparagine glycan. The FAD-binding PCMH-type domain maps to 41–212 (LLTTPSAIVW…TDFSIRTEPV (172 aa)).

The protein belongs to the oxygen-dependent FAD-linked oxidoreductase family. Requires FAD as cofactor.

It functions in the pathway secondary metabolite biosynthesis. FAD-linked oxidoreductase; part of the gene cluster that mediates the biosynthesis of sorbicillinoids, a diverse group of yellow secondary metabolites that restrict growth of competing pathogenic fungi but not of bacteria. Sorbicillinoids biosynthesis requires the action of two PKSs. SorA iteratively combines three acetyl units and the growing chain is modified by the ketoacyl reductase subunit, and optional by the enoyl reductase subunit in the second cycle. The polyketide is then handed over to the PKS SorB, which adds three more acetyl units, and two methyl groups. SorB releases an aldehyde, which undergoes spontaneous cyclization resulting in the formation of sorbicillin or 2',3'-dihydrosorbicillin. The monooxygenase sorC oxidizes sorbicillin and 2',3'-dihydrosorbicillin to 2',3'-dihydrosorbicillinol and sorbicillinol, respectively. The oxidoreductase sorD further converts sorbicillinol into oxosorbicillinol. Sorbicillinol is the building block for the other sorbicillinoids such as disorbicillinol, bisvertinolon, and dihydrobisvertinolone. This Penicillium rubens (strain ATCC 28089 / DSM 1075 / NRRL 1951 / Wisconsin 54-1255) (Penicillium chrysogenum) protein is FAD-linked oxidoreductase sorD.